An 808-amino-acid polypeptide reads, in one-letter code: Probable inorganic carbon transporter subunit DabA (808 aa).

Residues cysteine 335, aspartate 337, histidine 497, and cysteine 512 each contribute to the Zn(2+) site.

It belongs to the inorganic carbon transporter (TC 9.A.2) DabA family. As to quaternary structure, forms a complex with DabB. Requires Zn(2+) as cofactor.

It is found in the cell inner membrane. Its function is as follows. Part of an energy-coupled inorganic carbon pump. The protein is Probable inorganic carbon transporter subunit DabA of Rhodopseudomonas palustris (strain TIE-1).